Reading from the N-terminus, the 181-residue chain is ADP-ribosylation factor 1 (181 aa).

Gly2 carries N-myristoyl glycine lipidation. Residues 24-31 (GLDAAGKT), 67-71 (DVGGQ), and 126-129 (NKQD) each bind GTP.

The protein belongs to the small GTPase superfamily. Arf family. Seedling shoots.

The protein localises to the golgi apparatus. The catalysed reaction is GTP + H2O = GDP + phosphate + H(+). In terms of biological role, GTP-binding protein involved in protein trafficking; may modulate vesicle budding and uncoating within the Golgi apparatus. The chain is ADP-ribosylation factor 1 from Oryza sativa subsp. japonica (Rice).